We begin with the raw amino-acid sequence, 240 residues long: Phosphoribosylaminoimidazole-succinocarboxamide synthase (240 aa).

This sequence belongs to the SAICAR synthetase family.

The enzyme catalyses 5-amino-1-(5-phospho-D-ribosyl)imidazole-4-carboxylate + L-aspartate + ATP = (2S)-2-[5-amino-1-(5-phospho-beta-D-ribosyl)imidazole-4-carboxamido]succinate + ADP + phosphate + 2 H(+). Its pathway is purine metabolism; IMP biosynthesis via de novo pathway; 5-amino-1-(5-phospho-D-ribosyl)imidazole-4-carboxamide from 5-amino-1-(5-phospho-D-ribosyl)imidazole-4-carboxylate: step 1/2. The chain is Phosphoribosylaminoimidazole-succinocarboxamide synthase from Coxiella burnetii (strain RSA 493 / Nine Mile phase I).